Reading from the N-terminus, the 142-residue chain is Large ribosomal subunit protein uL13 (142 aa).

This sequence belongs to the universal ribosomal protein uL13 family. As to quaternary structure, part of the 50S ribosomal subunit.

Its function is as follows. This protein is one of the early assembly proteins of the 50S ribosomal subunit, although it is not seen to bind rRNA by itself. It is important during the early stages of 50S assembly. This is Large ribosomal subunit protein uL13 from Vibrio parahaemolyticus serotype O3:K6 (strain RIMD 2210633).